Here is a 113-residue protein sequence, read N- to C-terminus: Iron-sulfur cluster insertion protein ErpA (113 aa).

Iron-sulfur cluster is bound by residues Cys41, Cys105, and Cys107.

This sequence belongs to the HesB/IscA family. In terms of assembly, homodimer. The cofactor is iron-sulfur cluster.

Its function is as follows. Required for insertion of 4Fe-4S clusters for at least IspG. The protein is Iron-sulfur cluster insertion protein ErpA of Vibrio parahaemolyticus serotype O3:K6 (strain RIMD 2210633).